A 470-amino-acid polypeptide reads, in one-letter code: MHFSIPETESRSGDSGGSAYVAYNIHVNGVLHCRVRYSQLLGLREQLRKEYGANVLPAFPPKKLFSLTPAEVEQRREQLEKYMQAVRQDPLLGSSETFNSFLRRAQQETQQVPTEEVSLEVLLSNGQKVLVNVLTSDQTEDVLEAVAAKLDLPDDLIGYFSLFLVREKEDGAFSFVRKLQEFELPYVSVTSLRSQEYKIVLRKSYWDSAYDDDVMENRVGLNLLYAQTVSDIERGWILVTKEQHRQLKSLQEKVSKKEFLRLAQTLRHYGYLRFDACVADFPEKDCPVVVSAGNSELSLQLRLPGQQLREGSFRVTRMRCWRVTSSVPLPSGSTSSPGRGRGEVRLELAFEYLMSKDRLQWVTITSPQAIMMSICLQSMVDELMVKKSGGSIRKMLRRRVGGTLRRSDSQQAVKSPPLLESPDATRESMVKLSSKLSAVSLRGIGSPGTDASASDVHGNFAFEGIGDEDL.

The 109-residue stretch at 1-109 (MHFSIPETES…SFLRRAQQET (109 aa)) folds into the PX domain. The a 1,2-diacyl-sn-glycero-3-phospho-(1D-myo-inositol-3-phosphate) site is built by R36, S38, K62, and R75. The region spanning 115 to 206 (EEVSLEVLLS…YKIVLRKSYW (92 aa)) is the Ras-associating domain. Residues 115-432 (EEVSLEVLLS…DATRESMVKL (318 aa)) form an FERM-like region. The segment at 270–432 (GYLRFDACVA…DATRESMVKL (163 aa)) is PTB-like F3 module. 7 positions are modified to phosphoserine: S336, S407, S409, S415, S421, S437, and S440. Residues 400–425 (VGGTLRRSDSQQAVKSPPLLESPDAT) form a disordered region.

The protein belongs to the sorting nexin family. Monomer. Interacts with APP (via cytoplasmic YXNPXY motif). Interacts with KIF1B. Interacts with the C-termini of P-selectin, PTC, LDLR, VLDLR, LRP1 and LRP8. Interacts with KRIT1 (via N-terminus). Interacts with HRAS. Interacts with ITGB1 and ITGB5 (via NPxY motif). Interacts with CCDC22 and CCDC93; the interaction associates SNX17 with the CCC complex. Interacts (via C-terminus) with VPS26C and VPS35L; the interactions are direct and associate SNX17 with the retriever complex.

The protein resides in the cytoplasm. The protein localises to the early endosome. Its subcellular location is the cytoplasmic vesicle membrane. Critical regulator of endosomal recycling of numerous surface proteins, including integrins, signaling receptor and channels. Binds to NPxY sequences in the cytoplasmic tails of target cargos. Associates with retriever and CCC complexes to prevent lysosomal degradation and promote cell surface recycling of numerous cargos such as integrins ITGB1, ITGB5 and their associated alpha subunits. Also required for maintenance of normal cell surface levels of APP and LRP1. Interacts with membranes containing phosphatidylinositol 3-phosphate (PtdIns(3P)). This Pongo abelii (Sumatran orangutan) protein is Sorting nexin-17 (SNX17).